A 111-amino-acid polypeptide reads, in one-letter code: Nucleoid-associated protein Cpha266_1171 (111 aa).

It belongs to the YbaB/EbfC family. As to quaternary structure, homodimer.

It is found in the cytoplasm. Its subcellular location is the nucleoid. Binds to DNA and alters its conformation. May be involved in regulation of gene expression, nucleoid organization and DNA protection. This chain is Nucleoid-associated protein Cpha266_1171, found in Chlorobium phaeobacteroides (strain DSM 266 / SMG 266 / 2430).